Here is a 189-residue protein sequence, read N- to C-terminus: Small ribosomal subunit protein uS4 (189 aa).

The S4 RNA-binding domain maps to 107-178 (RRLQTQVFKL…AGRVKRKNQG (72 aa)). The segment at 160–189 (HNSPYGGGRAGRVKRKNQGKGGEEGAEEEE) is disordered.

The protein belongs to the universal ribosomal protein uS4 family. As to quaternary structure, component of the small ribosomal subunit. Mature ribosomes consist of a small (40S) and a large (60S) subunit. The 40S subunit contains about 32 different proteins and 1 molecule of RNA (18S). The 60S subunit contains 45 different proteins and 3 molecules of RNA (25S, 5.8S and 5S).

It is found in the cytoplasm. In terms of biological role, component of the ribosome, a large ribonucleoprotein complex responsible for the synthesis of proteins in the cell. The small ribosomal subunit (SSU) binds messenger RNAs (mRNAs) and translates the encoded message by selecting cognate aminoacyl-transfer RNA (tRNA) molecules. The large subunit (LSU) contains the ribosomal catalytic site termed the peptidyl transferase center (PTC), which catalyzes the formation of peptide bonds, thereby polymerizing the amino acids delivered by tRNAs into a polypeptide chain. The nascent polypeptides leave the ribosome through a tunnel in the LSU and interact with protein factors that function in enzymatic processing, targeting, and the membrane insertion of nascent chains at the exit of the ribosomal tunnel. RPS9B is involved in nucleolar processing of pre-18S ribosomal RNA and ribosome assembly. In Candida albicans (strain SC5314 / ATCC MYA-2876) (Yeast), this protein is Small ribosomal subunit protein uS4 (RPS9B).